Reading from the N-terminus, the 234-residue chain is MTTSDLPAFWTVIPAAGVGSRMRADRPKQYLDLAGRTVIERTLDCFLEHPMLRGLVVCLAEDDPYWPGLDCAASRHVQRAAGGAERAGSVLNGLLRLLELGAQADDWVLVHDAARPNLTRGDLDRLLEELAEDPVGGLLAVPARDTLKRSDRDGRVSETIDRSVVWLAYTPQMFRLGALHRALADALVAGVAITDEASAMEWAGYAPKLVEGRADNLKITTPEDLLRLQRSFPH.

The protein belongs to the IspD/TarI cytidylyltransferase family. IspD subfamily.

The enzyme catalyses 2-C-methyl-D-erythritol 4-phosphate + CTP + H(+) = 4-CDP-2-C-methyl-D-erythritol + diphosphate. It participates in isoprenoid biosynthesis; isopentenyl diphosphate biosynthesis via DXP pathway; isopentenyl diphosphate from 1-deoxy-D-xylulose 5-phosphate: step 2/6. Its function is as follows. Catalyzes the formation of 4-diphosphocytidyl-2-C-methyl-D-erythritol from CTP and 2-C-methyl-D-erythritol 4-phosphate (MEP). The polypeptide is 2-C-methyl-D-erythritol 4-phosphate cytidylyltransferase (Pseudomonas aeruginosa (strain ATCC 15692 / DSM 22644 / CIP 104116 / JCM 14847 / LMG 12228 / 1C / PRS 101 / PAO1)).